The sequence spans 1113 residues: Poly(A) RNA polymerase gld-2 (1113 aa).

Disordered stretches follow at residues 1–113 (MVMA…PKYH), 134–175 (RPIF…PTQP), 205–266 (LYRS…GQDP), and 445–513 (LDDE…DEST). The span at 22 to 52 (SPSVDSVSRVQQQSGGFAFYNQQSNHQYQQS) shows a compositional bias: low complexity. Over residues 60–106 (SRDGNTGYYNNHSGNKRQTYNNQRGGRSYNHRGNSNYQQNGEYSGNQ) the composition is skewed to polar residues. Low complexity predominate over residues 149–172 (RRSSPPSPSALSSSTANSTSNRAP). Over residues 223-233 (YKQPPPQPPST) the composition is skewed to pro residues. A compositionally biased stretch (basic and acidic residues) spans 451–485 (GADHDKTIDENRRRIHKSQEPRIGTEEKALNELPR). Residues 492–507 (SSCSSISSVSESSSPS) show a composition bias toward low complexity. Mg(2+)-binding residues include Asp-606 and Asp-608. The region spanning 780 to 816 (TLGELLIGFLDYYANEFNYDRDAISIRQGRRVERAAL) is the PAP-associated domain. 2 disordered regions span residues 817–854 (AVRP…GIPM) and 966–1113 (GPGH…NVSQ). Polar residues predominate over residues 972-994 (YQQQSNQNLSRPQRPGSNQGYQM). Low complexity-rich tracts occupy residues 995-1035 (NNNR…SRSN) and 1044-1061 (QQNS…KENV). Positions 1069–1084 (VDKKQQNSNRKDDGNR) are enriched in basic and acidic residues.

It belongs to the DNA polymerase type-B-like family. GLD2 subfamily. Interacts with gld-3. The cofactor is Mg(2+). Mn(2+) serves as cofactor. In terms of tissue distribution, germline-specific.

It localises to the cytoplasm. The catalysed reaction is RNA(n) + ATP = RNA(n)-3'-adenine ribonucleotide + diphosphate. Its function is as follows. Cytoplasmic poly(A) RNA polymerase that adds successive AMP monomers to the 3'-end of specific RNAs, forming a poly(A) tail. Acts as a regulator of mitosis/meiosis required for progression through meiotic prophase during oogenesis and spermatogenesis and for promotion of the entry into meiosis from the mitotic cell cycle. May act by regulating and activating gld-1 mRNA activity in germline. Required for polyadenylation of neg-1 mRNA during embryogenesis. This is Poly(A) RNA polymerase gld-2 (gld-2) from Caenorhabditis elegans.